Reading from the N-terminus, the 59-residue chain is Cecropin-A (59 aa).

The signal sequence occupies residues 1–23 (MNFTKLFLLIAMAVLLLTGQSEA). A propeptide spans 58–59 (GK) (removed in mature form (AeaeCec2)).

In terms of tissue distribution, hemolymph (at protein level).

The protein localises to the secreted. Its function is as follows. Antimicrobial peptide. Antibacterial activity against Gram-negative bacteria E.coli D22 and D31, E.carotovora, K.pneumoniae, P.aeruginosa, S.typhimurium, E.cloacae B12 and X.campestris and Gram-positive bacteria A.viridans, M.luteus, B.megaterium and S.pyogenes. Possesses antifungal activity against F.oxysporum, F.culmorum and N.crassa, C.albicans, C.neoformans and S.cerevisiae. No activity against Gram-negative S.marcescens Db11, Gram-positive B.cereus, B.subtilis, B.thuringiensis, S.aureus and L.monocytogenes, the fungi A.fumigatus and B.bassiana and C.glabrata. Partially neutralizes lipopolysaccharides (LPS). Exhibits anti-inflammatory properties: inhibits LPS-induced iNOS/NOS2 transcription, nitric oxide (NO) and pro-inflammatory cytokine production in mouse macrophages and human peripheral blood mononuclear cells (PBMCs); inhibits LPS-induced activation of MAPK and NF-kappa-B signaling pathways in mouse macrophages. The chain is Cecropin-A (CECA) from Aedes aegypti (Yellowfever mosquito).